The sequence spans 431 residues: MTNRLETKYENLSSIFRLKGHDYQKQFFHLYAHRLAEMTRLLTPLAQKKWGNKEPIKKLCELRGEQDVHCILIGTIFKHQAHKPSILRDISEENQLAPQPPRQNYSDPEDKIVLEDELQRVRLQGKLNGQLLATGVVCAALGGTDSDGFFNVEDILFYESGPQKPLAPIKRSRLLVLASGLDQLQAHKFVEALNLFQYWLAGSLGNNKEAGSMVRLIVAGNSVRASAMAHVPTLQVARTQANANDTVQAVSQLDQWFASWARSLPVDIMPGPYDPANFMLPQQPFHKCMFPQAAQLATFQAVTNPYSCRLDEALVVGTSGQNVSDLLRSTSLDSALEALRCTLTWGHVAPTAPDTLACYPYIESDPFILRECPHVYYAGNCESFATELHEGSEGKRTRLVCVPSFSKTQSVAVVDLDTLDCRMVNFSVDAE.

This sequence belongs to the DNA polymerase delta/II small subunit family. Component of both the DNA polymerase delta and DNA polymerase zeta complexes. The DNA polymerase delta complex consisting of three subunits: the catalytic subunit PolD1 and two accessory subunits PolD2/Pol31 and PolD3/Pol32. Within the delta complex, interacts with both PolD1 and PolD3, and is able to interact with PolD1 in the absence of PolD3. Component of the DNA polymerase zeta complex consisting of four subunits: the catalytic subunit PolZ1 and three accessory subunits PolZ2/Rev7, PolD2/Pol31 and PolD3/Pol32. In terms of tissue distribution, expressed in ovaries and embryos (at the protein level).

Its subcellular location is the nucleus. It is found in the nucleoplasm. Functionally, accessory component of both the DNA polymerase delta complex and possibly the DNA polymerase zeta complex. As a component of the delta complex, participates in high fidelity genome replication, including lagging strand synthesis, DNA recombination and repair. Appears to promote the function of the DNA pol-delta complex accessory subunit PolD3 in both embryonic and postembryonic somatic cells. This chain is DNA polymerase delta subunit 2, found in Drosophila melanogaster (Fruit fly).